The primary structure comprises 458 residues: Retinoic acid receptor gamma (458 aa).

Positions 1-89 are modulating; the sequence is MATNKERLFA…PPPPPRVYKP (89 aa). Arginine 34 carries the post-translational modification Omega-N-methylarginine. Residues 58 to 83 form a disordered region; that stretch reads MASLSVETQSTSSEEMVPSSPSPPPP. Polar residues predominate over residues 62 to 71; that stretch reads SVETQSTSSE. 2 consecutive NR C4-type zinc fingers follow at residues 90 to 110 and 126 to 150; these read CFVC…CEGC and CHRD…LQKC. The nuclear receptor DNA-binding region spans 90–155; sequence CFVCNDKSSG…RLQKCFEVGM (66 aa). The interval 156-184 is hinge; that stretch reads SKEAVRNDRNKKKKEVKEEGSPDSYELSP. Residues 161–180 form a disordered region; sequence RNDRNKKKKEVKEEGSPDSY. Glycyl lysine isopeptide (Lys-Gly) (interchain with G-Cter in SUMO2) cross-links involve residues lysine 172 and lysine 401. The region spanning 185-419 is the NR LBD domain; it reads QLEELITKVS…PLIREMLENP (235 aa). A disordered region spans residues 409–458; that stretch reads PPLIREMLENPEMFEDDSSKPGPHPKASSEDEAPGGQGKRGQSPQPDQGP. The span at 448 to 458 shows a compositional bias: polar residues; that stretch reads RGQSPQPDQGP.

Belongs to the nuclear hormone receptor family. NR1 subfamily. As to quaternary structure, homodimer. Heterodimer with a RXR molecule. Binds DNA preferentially as a RAR/RXR heterodimer. Forms a complex with PUS1 and the SRA1 RNA in the nucleus.

It is found in the nucleus. Its subcellular location is the cytoplasm. Functionally, receptor for retinoic acid. Retinoic acid receptors bind as heterodimers to their target response elements in response to their ligands, all-trans or 9-cis retinoic acid, and regulate gene expression in various biological processes. The RAR/RXR heterodimers bind to the retinoic acid response elements (RARE) composed of tandem 5'-AGGTCA-3' sites known as DR1-DR5. In the absence of ligand, acts mainly as an activator of gene expression due to weak binding to corepressors. Required for limb bud development. In concert with RARA or RARB, required for skeletal growth, matrix homeostasis and growth plate function. The protein is Retinoic acid receptor gamma (Rarg) of Mus musculus (Mouse).